Consider the following 202-residue polypeptide: Imidazoleglycerol-phosphate dehydratase (202 aa).

Belongs to the imidazoleglycerol-phosphate dehydratase family.

The protein resides in the cytoplasm. The catalysed reaction is D-erythro-1-(imidazol-4-yl)glycerol 3-phosphate = 3-(imidazol-4-yl)-2-oxopropyl phosphate + H2O. The protein operates within amino-acid biosynthesis; L-histidine biosynthesis; L-histidine from 5-phospho-alpha-D-ribose 1-diphosphate: step 6/9. In Synechococcus sp. (strain CC9605), this protein is Imidazoleglycerol-phosphate dehydratase.